We begin with the raw amino-acid sequence, 103 residues long: Large ribosomal subunit protein uL24 (103 aa).

Belongs to the universal ribosomal protein uL24 family. As to quaternary structure, part of the 50S ribosomal subunit.

Functionally, one of two assembly initiator proteins, it binds directly to the 5'-end of the 23S rRNA, where it nucleates assembly of the 50S subunit. Its function is as follows. One of the proteins that surrounds the polypeptide exit tunnel on the outside of the subunit. The polypeptide is Large ribosomal subunit protein uL24 (Halalkalibacterium halodurans (strain ATCC BAA-125 / DSM 18197 / FERM 7344 / JCM 9153 / C-125) (Bacillus halodurans)).